Reading from the N-terminus, the 601-residue chain is DNA ligase (601 aa).

D258 is an ATP binding site. K260 acts as the N6-AMP-lysine intermediate in catalysis. 6 residues coordinate ATP: R265, R280, E310, F350, R427, and K433. The interval 568–601 (DKSPEDATTTDEILEMYNKQPKKKIESPPIDESV) is disordered.

Belongs to the ATP-dependent DNA ligase family. It depends on Mg(2+) as a cofactor.

The enzyme catalyses ATP + (deoxyribonucleotide)n-3'-hydroxyl + 5'-phospho-(deoxyribonucleotide)m = (deoxyribonucleotide)n+m + AMP + diphosphate.. Functionally, DNA ligase that seals nicks in double-stranded DNA during DNA replication, DNA recombination and DNA repair. This chain is DNA ligase, found in Saccharolobus islandicus (strain L.S.2.15 / Lassen #1) (Sulfolobus islandicus).